We begin with the raw amino-acid sequence, 239 residues long: Pimeloyl-[acyl-carrier protein] methyl ester esterase (239 aa).

Substrate-binding positions include tryptophan 20, 77-78 (SM), and 138-142 (FISLQ). Serine 77 functions as the Nucleophile in the catalytic mechanism. Residues aspartate 192 and histidine 220 contribute to the active site. Histidine 220 provides a ligand contact to substrate.

The protein belongs to the AB hydrolase superfamily. Carboxylesterase BioH family. As to quaternary structure, monomer.

The protein localises to the cytoplasm. The enzyme catalyses 6-carboxyhexanoyl-[ACP] methyl ester + H2O = 6-carboxyhexanoyl-[ACP] + methanol + H(+). The protein operates within cofactor biosynthesis; biotin biosynthesis. In terms of biological role, the physiological role of BioH is to remove the methyl group introduced by BioC when the pimeloyl moiety is complete. It allows to synthesize pimeloyl-ACP via the fatty acid synthetic pathway through the hydrolysis of the ester bonds of pimeloyl-ACP esters. This Legionella pneumophila (strain Paris) protein is Pimeloyl-[acyl-carrier protein] methyl ester esterase.